The chain runs to 113 residues: Small ribosomal subunit protein uS17 (113 aa).

Belongs to the universal ribosomal protein uS17 family. As to quaternary structure, part of the 30S ribosomal subunit.

Functionally, one of the primary rRNA binding proteins, it binds specifically to the 5'-end of 16S ribosomal RNA. The sequence is that of Small ribosomal subunit protein uS17 from Pyrococcus furiosus (strain ATCC 43587 / DSM 3638 / JCM 8422 / Vc1).